The primary structure comprises 107 residues: Regulatory protein SoxS (107 aa).

Residues 8–106 enclose the HTH araC/xylS-type domain; that stretch reads QTLIEWIDEH…DRTPSDYRHR (99 aa). DNA-binding regions (H-T-H motif) lie at residues 25–46 and 73–96; these read DVVA…RTVT and IFDI…RREF.

It localises to the cytoplasm. Functionally, transcriptional activator of the superoxide response regulon of E.coli that includes at least 10 genes such as sodA, nfo, zwf and micF. Binds the DNA sequence 5'-GCACN(7)CAA-3'. It also facilitates the subsequent binding of RNA polymerase to the micF and the nfo promoters. The sequence is that of Regulatory protein SoxS (soxS) from Salmonella typhimurium (strain LT2 / SGSC1412 / ATCC 700720).